The primary structure comprises 208 residues: MKVVEVKHPLVRHKIGLMREGDISTKRFRELAAEVGSLLTYEATADFETEAVTIEGWNGPVEVEQIKGKKVTVVPILRAGLGMMDGVLEHIPSARISVVGMYRDEETLEPVPYFEKLASDMPSRIALVVDPMLATGGSMISTIDLLKERGCTSIKALVLVAAPEGVAALEKAHPDIELYTASIDDCLNDQGYILPGLGDAGDKIFGTK.

Residues arginine 78, arginine 103, and 130 to 138 contribute to the 5-phospho-alpha-D-ribose 1-diphosphate site; that span reads DPMLATGGS. Uracil contacts are provided by residues isoleucine 193 and 198–200; that span reads GDA. Aspartate 199 contributes to the 5-phospho-alpha-D-ribose 1-diphosphate binding site.

Belongs to the UPRTase family. Mg(2+) serves as cofactor.

It carries out the reaction UMP + diphosphate = 5-phospho-alpha-D-ribose 1-diphosphate + uracil. The protein operates within pyrimidine metabolism; UMP biosynthesis via salvage pathway; UMP from uracil: step 1/1. With respect to regulation, allosterically activated by GTP. Its function is as follows. Catalyzes the conversion of uracil and 5-phospho-alpha-D-ribose 1-diphosphate (PRPP) to UMP and diphosphate. The protein is Uracil phosphoribosyltransferase of Shewanella woodyi (strain ATCC 51908 / MS32).